The following is a 440-amino-acid chain: Proton extrusion protein PxcA (440 aa).

The next 4 helical transmembrane spans lie at 222-242 (FVLT…TFFL), 316-336 (NAIA…LVLV), 352-374 (IVYG…MFVG), and 400-420 (FNFL…KYWI).

This sequence belongs to the CemA family.

It is found in the cell inner membrane. Required for H(+) efflux immediately after light irradiation to form a rapid H(+) concentration gradient across the thylakoid membranes. Together with PxcL, contributes to transient H(+) uptake following dark to light transition. Involved in light-induced Na(+)-dependent proton extrusion. Also seems to be involved in CO(2) transport. The protein is Proton extrusion protein PxcA of Synechocystis sp. (strain ATCC 27184 / PCC 6803 / Kazusa).